We begin with the raw amino-acid sequence, 94 residues long: Large ribosomal subunit protein uL23 (94 aa).

It belongs to the universal ribosomal protein uL23 family. As to quaternary structure, part of the 50S ribosomal subunit. Contacts protein L29, and trigger factor when it is bound to the ribosome.

Its function is as follows. One of the early assembly proteins it binds 23S rRNA. One of the proteins that surrounds the polypeptide exit tunnel on the outside of the ribosome. Forms the main docking site for trigger factor binding to the ribosome. This chain is Large ribosomal subunit protein uL23, found in Ligilactobacillus salivarius (strain UCC118) (Lactobacillus salivarius).